The following is a 479-amino-acid chain: Cardiolipin synthase A (479 aa).

2 helical membrane passes run 8–28 and 38–58; these read FFGYLLGMIHLLGIVAALHAL and IAWAMPLLFIPYLTLIPYLIF. PLD phosphodiesterase domains lie at 218–245 and 392–419; these read VNFRNHRKIVVVDGLLGFIGGHNVGDEY and QPGFLHQKVVLVDDDVSAIGSANLDNRS. Catalysis depends on residues histidine 223, lysine 225, aspartate 230, histidine 397, lysine 399, and aspartate 404.

It belongs to the phospholipase D family. Cardiolipin synthase subfamily. ClsA sub-subfamily.

The protein resides in the cell inner membrane. The enzyme catalyses 2 a 1,2-diacyl-sn-glycero-3-phospho-(1'-sn-glycerol) = a cardiolipin + glycerol. Functionally, catalyzes the reversible phosphatidyl group transfer from one phosphatidylglycerol molecule to another to form cardiolipin (CL) (diphosphatidylglycerol) and glycerol. The polypeptide is Cardiolipin synthase A (Pseudomonas putida (strain ATCC 700007 / DSM 6899 / JCM 31910 / BCRC 17059 / LMG 24140 / F1)).